We begin with the raw amino-acid sequence, 454 residues long: Pup--protein ligase (454 aa).

Glutamate 9 serves as a coordination point for Mg(2+). Arginine 53 serves as a coordination point for ATP. Tyrosine 55 provides a ligand contact to Mg(2+). Residue aspartate 57 is the Proton acceptor of the active site. Glutamate 63 lines the Mg(2+) pocket. Residues threonine 66 and tryptophan 420 each coordinate ATP.

It belongs to the Pup ligase/Pup deamidase family. Pup-conjugating enzyme subfamily.

It carries out the reaction ATP + [prokaryotic ubiquitin-like protein]-L-glutamate + [protein]-L-lysine = ADP + phosphate + N(6)-([prokaryotic ubiquitin-like protein]-gamma-L-glutamyl)-[protein]-L-lysine.. It participates in protein degradation; proteasomal Pup-dependent pathway. It functions in the pathway protein modification; protein pupylation. Its function is as follows. Catalyzes the covalent attachment of the prokaryotic ubiquitin-like protein modifier Pup to the proteasomal substrate proteins, thereby targeting them for proteasomal degradation. This tagging system is termed pupylation. The ligation reaction involves the side-chain carboxylate of the C-terminal glutamate of Pup and the side-chain amino group of a substrate lysine. The protein is Pup--protein ligase of Paenarthrobacter aurescens (strain TC1).